The sequence spans 439 residues: Mitochondrial distribution and morphology protein 12 (439 aa).

An SMP-LTD domain is found at 1–439 (MSIDINWDTI…VYPSFWTFLV (439 aa)). Disordered stretches follow at residues 65-165 (PLPD…PGAL) and 229-284 (LTLT…HEKS). The segment covering 69 to 90 (FYEDDEDYPDEEGDEAENEAED) has biased composition (acidic residues). Basic and acidic residues predominate over residues 109–121 (PSRDSQSRERGRG). Over residues 229 to 243 (LTLTPQSHPDPTSRP) the composition is skewed to polar residues.

The protein belongs to the MDM12 family. As to quaternary structure, component of the ER-mitochondria encounter structure (ERMES) or MDM complex, composed of MMM1, MDM10, mdm12 and MDM34. An MMM1 homodimer associates with one molecule of mdm12 on each side in a pairwise head-to-tail manner, and the SMP-LTD domains of MMM1 and mdm12 generate a continuous hydrophobic tunnel for phospholipid trafficking.

Its subcellular location is the mitochondrion outer membrane. It localises to the endoplasmic reticulum membrane. In terms of biological role, component of the ERMES/MDM complex, which serves as a molecular tether to connect the endoplasmic reticulum (ER) and mitochondria. Components of this complex are involved in the control of mitochondrial shape and protein biogenesis, and function in nonvesicular lipid trafficking between the ER and mitochondria. mdm12 is required for the interaction of the ER-resident membrane protein MMM1 and the outer mitochondrial membrane-resident beta-barrel protein MDM10. The mdm12-MMM1 subcomplex functions in the major beta-barrel assembly pathway that is responsible for biogenesis of all mitochondrial outer membrane beta-barrel proteins, and acts in a late step after the SAM complex. The MDM10-mdm12-MMM1 subcomplex further acts in the TOM40-specific pathway after the action of the mdm12-MMM1 complex. Essential for establishing and maintaining the structure of mitochondria and maintenance of mtDNA nucleoids. This Pyrenophora tritici-repentis (strain Pt-1C-BFP) (Wheat tan spot fungus) protein is Mitochondrial distribution and morphology protein 12.